The following is a 63-amino-acid chain: Hirudin (63 aa).

The interaction with thrombin active site stretch occupies residues 1–3 (VVY). Disulfide bonds link cysteine 6/cysteine 14, cysteine 16/cysteine 28, and cysteine 22/cysteine 39. The disordered stretch occupies residues 39-63 (CVTGEGTPGPQSHNDGDFEEPEEYL). O-linked (GalNAc...) threonine glycosylation occurs at threonine 45. Residues 55–63 (DFEEPEEYL) are interaction with fibrinogen-binding exosite of thrombin. At tyrosine 62 the chain carries Sulfotyrosine.

This sequence belongs to the protease inhibitor I14 (hirudin) family.

It localises to the secreted. In terms of biological role, hirudin is a potent thrombin-specific protease inhibitor. It forms a stable non-covalent complex with alpha-thrombin, thereby abolishing its ability to cleave fibrinogen. This chain is Hirudin, found in Poecilobdella viridis (Indian freshwater leech).